We begin with the raw amino-acid sequence, 167 residues long: uncharacterized protein (167 aa).

The N-terminal stretch at 1–25 is a signal peptide; the sequence is MPFSVTKFSLIFVALLLAEALVAQS.

This is an uncharacterized protein from Caenorhabditis elegans.